Reading from the N-terminus, the 302-residue chain is Glycine N-acyltransferase-like protein 1 (302 aa).

The protein belongs to the glycine N-acyltransferase family. Expressed in liver and kidney and, at lower levels, in pancreas, testis, ovary and stomach.

The enzyme catalyses an acyl-CoA + L-glutamine = an N(2)-acyl-L-glutamine + CoA + H(+). In terms of biological role, acyltransferase which transfers an acyl group to the N-terminus of glutamine. Can use phenylacetyl-CoA as an acyl donor. In Homo sapiens (Human), this protein is Glycine N-acyltransferase-like protein 1.